We begin with the raw amino-acid sequence, 266 residues long: 4-hydroxy-tetrahydrodipicolinate reductase (266 aa).

NAD(+) is bound by residues 7–12 (GTIGRM), Glu-33, 96–98 (GTT), and 120–123 (APNM). His-153 acts as the Proton donor/acceptor in catalysis. Residue His-154 coordinates (S)-2,3,4,5-tetrahydrodipicolinate. Lys-157 functions as the Proton donor in the catalytic mechanism. 163 to 164 (GT) provides a ligand contact to (S)-2,3,4,5-tetrahydrodipicolinate.

Belongs to the DapB family.

It localises to the cytoplasm. The enzyme catalyses (S)-2,3,4,5-tetrahydrodipicolinate + NAD(+) + H2O = (2S,4S)-4-hydroxy-2,3,4,5-tetrahydrodipicolinate + NADH + H(+). It catalyses the reaction (S)-2,3,4,5-tetrahydrodipicolinate + NADP(+) + H2O = (2S,4S)-4-hydroxy-2,3,4,5-tetrahydrodipicolinate + NADPH + H(+). It participates in amino-acid biosynthesis; L-lysine biosynthesis via DAP pathway; (S)-tetrahydrodipicolinate from L-aspartate: step 4/4. In terms of biological role, catalyzes the conversion of 4-hydroxy-tetrahydrodipicolinate (HTPA) to tetrahydrodipicolinate. The chain is 4-hydroxy-tetrahydrodipicolinate reductase from Polynucleobacter necessarius subsp. necessarius (strain STIR1).